An 89-amino-acid polypeptide reads, in one-letter code: MTAMAVSGKLLTALVLSTYILGLALTIQATQYEEDKYQENEVKYGRELASWLAQLAHKNEPAICAHKRNSEIINSLLGLPKLLNDAGRK.

The N-terminal stretch at 1–22 (MTAMAVSGKLLTALVLSTYILG) is a signal peptide. Alanine 86 carries the post-translational modification Alanine amide.

It belongs to the arthropod PDH family.

Its subcellular location is the secreted. Functionally, capable of inducing pigment dispersion in the chromatophores of the fiddler crab Uca pugilator. In Romalea microptera (Eastern lubber grasshopper), this protein is Pigment-dispersing hormone peptides.